The following is a 265-amino-acid chain: Probable U2 small nuclear ribonucleoprotein A' (265 aa).

LRR repeat units follow at residues 20 to 41 (RERE…GATL), 43 to 64 (QFDT…PHLP), 65 to 86 (RLKC…LEEA), and 89 to 110 (NLGS…EPLV). An LRRCT domain is found at 123–161 (NPVSTKPNYREYMAYKFPQLRLLDFRKIKQKDRQAAQEF).

It belongs to the U2 small nuclear ribonucleoprotein A family. As to quaternary structure, interacts with the SMN complex.

The protein resides in the nucleus. Its function is as follows. Involved in pre-mRNA splicing as component of the spliceosome. Associated with sn-RNP U2, where it contributes to the binding of stem loop IV of U2 snRNA. In the germ line, has a role in oogenesis, by regulating spermatogenesis and nurse cell nuclei chromatin decondensation and dispersal, probably by regulating the splicing of proteins necessary for germline differentiation such as the meiotic protein mei-P26. This is Probable U2 small nuclear ribonucleoprotein A' (U2A) from Drosophila melanogaster (Fruit fly).